Consider the following 197-residue polypeptide: Endothelial cell-specific chemotaxis regulator (197 aa).

Positions 1-23 (MGSVRETQLRWAILGFLLLQAAS) are cleaved as a signal peptide. At 24 to 113 (ETPSQFSTEA…PSPTSETVLT (90 aa)) the chain is on the extracellular side. The tract at residues 40–107 (TVADHLPSSP…ADSTVPPSPT (68 aa)) is disordered. Residues 50–63 (GPTWSQSQKHTSGL) are compositionally biased toward polar residues. Low complexity predominate over residues 64 to 82 (SADVPSSGRSSDSMSGDTS). Over residues 83–107 (HNVTSTSPNMSFRTTADSTVPPSPT) the composition is skewed to polar residues. The chain crosses the membrane as a helical span at residues 114-134 (VAAFGVISFIAILVVVVIVLV). Residues 135 to 197 (SVVSLRFKCR…KGCPSAEKVL (63 aa)) lie on the Cytoplasmic side of the membrane. 2 disordered regions span residues 146-172 (NKES…GEKE) and 178-197 (SMKN…EKVL). 2 stretches are compositionally biased toward polar residues: residues 155–168 (PGSS…STAN) and 178–189 (SMKNINMNNSKG). Position 187 is a phosphoserine (serine 187).

It belongs to the ECSCR family. As to quaternary structure, interacts with FLNA. Interacts with the 20S proteasome subunit PSMA7. Post-translationally, may be heavily O-glycosylated.

The protein localises to the cell membrane. It is found in the cytoplasm. Regulates endothelial chemotaxis and tube formation. Has a role in angiogenesis and apoptosis via modulation of the actin cytoskeleton and facilitation of proteasomal degradation of the apoptosis inhibitors BIRC3/IAP1 and BIRC2/IAP2. The polypeptide is Endothelial cell-specific chemotaxis regulator (ECSCR) (Bos taurus (Bovine)).